The chain runs to 351 residues: Histidinol-phosphate aminotransferase 1 (351 aa).

Residue Lys210 is modified to N6-(pyridoxal phosphate)lysine.

It belongs to the class-II pyridoxal-phosphate-dependent aminotransferase family. Histidinol-phosphate aminotransferase subfamily. Homodimer. Pyridoxal 5'-phosphate serves as cofactor.

The catalysed reaction is L-histidinol phosphate + 2-oxoglutarate = 3-(imidazol-4-yl)-2-oxopropyl phosphate + L-glutamate. The protein operates within amino-acid biosynthesis; L-histidine biosynthesis; L-histidine from 5-phospho-alpha-D-ribose 1-diphosphate: step 7/9. The polypeptide is Histidinol-phosphate aminotransferase 1 (hisC1) (Pasteurella multocida (strain Pm70)).